The following is a 133-amino-acid chain: MKLQIPAGKANPAPPVGPALGQAGVNIMAFCKEFNARTADQAGLIIPVEITVFEDRSFTFITKTPPAAVLLKKAAGIESGSGEPNRNKVATIKRDKVREIAELKMPDLNAASIEAAMRMIEGTARSMGIVVED.

Belongs to the universal ribosomal protein uL11 family. Part of the ribosomal stalk of the 50S ribosomal subunit. Interacts with L10 and the large rRNA to form the base of the stalk. L10 forms an elongated spine to which 2 L12 dimers bind in a sequential fashion forming a pentameric L10(L12)2(L12)2 complex. Post-translationally, one or more lysine residues are methylated.

Functionally, forms part of the ribosomal stalk which helps the ribosome interact with GTP-bound translation factors. The chain is Large ribosomal subunit protein uL11 from Geobacillus stearothermophilus (Bacillus stearothermophilus).